The following is a 326-amino-acid chain: Interleukin-1-binding protein (326 aa).

The signal sequence occupies residues 1–18 (MSILPVIFLSIFFYSSFV). 3 consecutive Ig-like domains span residues 24–115 (PECI…LNLT), 122–212 (SNID…RIVK), and 221–322 (PSTM…KTVT). Cysteines 48 and 99 form a disulfide. 3 N-linked (GlcNAc...) asparagine; by host glycosylation sites follow: asparagine 80, asparagine 103, and asparagine 113. Cysteine 143 and cysteine 194 are oxidised to a cystine. N-linked (GlcNAc...) asparagine; by host glycans are attached at residues asparagine 206 and asparagine 237. Residues cysteine 242 and cysteine 309 are joined by a disulfide bond.

The protein belongs to the interleukin-1 receptor family. As to quaternary structure, interacts with mouse Il1b.

It is found in the secreted. In terms of biological role, may reduce the host inflammatory response by interacting with inteleukin-1 beta (Il1b) and thus decreasing the association between IL1B and its cellular receptor. This chain is Interleukin-1-binding protein (OPG201), found in Vaccinia virus (strain Western Reserve) (VACV).